The sequence spans 469 residues: Transcription factor E2FB (469 aa).

2 disordered regions span residues 1–28 (MSEEVPQQFPSSKRQLHPSLSSMKPPLV) and 84–118 (QTPVSGKGGKAKKTSRSAKSNKSGTLASGSNAGSP). 2 stretches are compositionally biased toward polar residues: residues 8–22 (QFPSSKRQLHPSLSS) and 100–118 (SAKSNKSGTLASGSNAGSP). A DNA-binding region spans residues 129–194 (RYDSSLGLLT…TLKNRIQWKG (66 aa)). The stretch at 202-246 (ETIESIANLQDEVQNLAAEEARLDDQIRESQERLTSLSEDENNKR) forms a coiled coil. The segment at 210-238 (LQDEVQNLAAEEARLDDQIRESQERLTSL) is leucine-zipper. The segment at 319–374 (PQADEPSNVPDEPSNVPDVPSNLPSTSGLPENHDVSMPMKEESTERNMETQEVDDT) is disordered. A compositionally biased stretch (basic and acidic residues) spans 349–374 (ENHDVSMPMKEESTERNMETQEVDDT). The interval 403-419 (DYWFRSEVGEVSITDMW) is retinoblastoma protein binding. The segment at 426–469 (DWNQMITFDQDHAGPSDNKILEQPQTPSSPTPEESTATRSPTGS) is disordered. The span at 447–469 (EQPQTPSSPTPEESTATRSPTGS) shows a compositional bias: low complexity.

The protein belongs to the E2F/DP family. As to quaternary structure, heterodimer with DP proteins. Interacts (via dimerization domain) preferentially with DPA, but also with DPB. Interacts with PURA1 and retinoblastoma-related protein RBR1. Component of a DREAM-like complex which modulates a variety of developmentally regulated genes and of the mitotic genes in proliferating and differentiated cells. Interacts with MYB3R4 only at early stages of leaves development. Post-translationally, phosphorylated. In terms of tissue distribution, expressed in proliferating cells and several differentiated tissues. Detected in inflorescence and shoot apical meristems, cotyledonary vascular tissues, leaf primordia, young leaves, base of trichomes, central cylinder and elongation zone of roots, lateral root primordia, flowers, pistils of immature flowers and pollen grains.

Its subcellular location is the cytoplasm. It is found in the nucleus. Transcription activator that binds DNA cooperatively with DP proteins through the E2 recognition site, 5'-TTTC[CG]CGC-3' found in the promoter region of a number of genes whose products are involved in cell cycle regulation or in DNA replication. The binding of retinoblastoma-related proteins represses transactivation. Involved in the control of cell-cycle progression from G1 to S phase and from G2 to M phase. Stimulates cell proliferation and delays differentiation. Represses cell enlargement and endoreduplication in auxin-free conditions. This Arabidopsis thaliana (Mouse-ear cress) protein is Transcription factor E2FB (E2FB).